A 324-amino-acid chain; its full sequence is Quinolinate synthase (324 aa).

Positions 39 and 56 each coordinate iminosuccinate. Cys-101 contributes to the [4Fe-4S] cluster binding site. Iminosuccinate is bound by residues 127 to 129 (YIN) and Ser-144. Cys-187 serves as a coordination point for [4Fe-4S] cluster. Residues 213-215 (HPE) and Thr-230 contribute to the iminosuccinate site. Residue Cys-280 coordinates [4Fe-4S] cluster.

It belongs to the quinolinate synthase family. Type 2 subfamily. It depends on [4Fe-4S] cluster as a cofactor.

The protein resides in the cytoplasm. The enzyme catalyses iminosuccinate + dihydroxyacetone phosphate = quinolinate + phosphate + 2 H2O + H(+). It functions in the pathway cofactor biosynthesis; NAD(+) biosynthesis; quinolinate from iminoaspartate: step 1/1. In terms of biological role, catalyzes the condensation of iminoaspartate with dihydroxyacetone phosphate to form quinolinate. In Trichormus variabilis (strain ATCC 29413 / PCC 7937) (Anabaena variabilis), this protein is Quinolinate synthase.